Reading from the N-terminus, the 330-residue chain is Aspartate--ammonia ligase (330 aa).

The protein belongs to the class-II aminoacyl-tRNA synthetase family. AsnA subfamily.

The protein resides in the cytoplasm. The catalysed reaction is L-aspartate + NH4(+) + ATP = L-asparagine + AMP + diphosphate + H(+). It participates in amino-acid biosynthesis; L-asparagine biosynthesis; L-asparagine from L-aspartate (ammonia route): step 1/1. This is Aspartate--ammonia ligase from Streptococcus pyogenes serotype M1.